The primary structure comprises 141 residues: ATP synthase epsilon chain (141 aa).

It belongs to the ATPase epsilon chain family. In terms of assembly, F-type ATPases have 2 components, CF(1) - the catalytic core - and CF(0) - the membrane proton channel. CF(1) has five subunits: alpha(3), beta(3), gamma(1), delta(1), epsilon(1). CF(0) has three main subunits: a, b and c.

Its subcellular location is the cell inner membrane. Functionally, produces ATP from ADP in the presence of a proton gradient across the membrane. This chain is ATP synthase epsilon chain, found in Burkholderia thailandensis (strain ATCC 700388 / DSM 13276 / CCUG 48851 / CIP 106301 / E264).